Reading from the N-terminus, the 620-residue chain is GTP-binding protein At3g49725, chloroplastic (620 aa).

Residues 1–65 (MSVTTSFGIW…SSFLARDRLR (65 aa)) constitute a chloroplast transit peptide. The interval 57 to 100 (SFLARDRLRSKTPSSSPFSSKRHTPKTSEIEEESTPKDSVLLNP) is disordered. A Hflx-type G domain is found at 346–585 (GTIAVVGYTN…LIDDKMKEKK (240 aa)). GTP is bound by residues 352-359 (GYTNAGKS), 377-381 (FATLD), 399-402 (DTVG), and 468-471 (NKID). The Mg(2+) site is built by S359 and T379. Composition is skewed to acidic residues over residues 478–497 (EEEK…EDEA) and 511–521 (TVDEDQIQNGD). Residues 478 to 521 (EEEKYLDDGEGVGEEDEDEADLKAEETVDASEATVDEDQIQNGD) form a disordered region. 563-565 (SAL) contacts GTP. The segment at 597–620 (LHKRKWRPPRNDDEEERLIPLDQR) is disordered.

This sequence belongs to the TRAFAC class OBG-HflX-like GTPase superfamily. HflX GTPase family. Mg(2+) is required as a cofactor.

The protein resides in the plastid. The protein localises to the chloroplast. This Arabidopsis thaliana (Mouse-ear cress) protein is GTP-binding protein At3g49725, chloroplastic.